The chain runs to 425 residues: Enolase (425 aa).

Residues 31 to 54 are disordered; sequence TGSAIVPSGASTGEKEAVELRDSD. Over residues 43-54 the composition is skewed to basic and acidic residues; it reads GEKEAVELRDSD. (2R)-2-phosphoglycerate is bound at residue Gln162. The active-site Proton donor is Glu204. Mg(2+) is bound by residues Asp241, Glu285, and Asp312. (2R)-2-phosphoglycerate contacts are provided by Lys337, Arg366, Ser367, and Lys388. Lys337 acts as the Proton acceptor in catalysis.

The protein belongs to the enolase family. Requires Mg(2+) as cofactor.

Its subcellular location is the cytoplasm. The protein localises to the secreted. The protein resides in the cell surface. The catalysed reaction is (2R)-2-phosphoglycerate = phosphoenolpyruvate + H2O. The protein operates within carbohydrate degradation; glycolysis; pyruvate from D-glyceraldehyde 3-phosphate: step 4/5. Functionally, catalyzes the reversible conversion of 2-phosphoglycerate (2-PG) into phosphoenolpyruvate (PEP). It is essential for the degradation of carbohydrates via glycolysis. This is Enolase from Gloeobacter violaceus (strain ATCC 29082 / PCC 7421).